The following is a 235-amino-acid chain: Large ribosomal subunit protein uL1 (235 aa).

Belongs to the universal ribosomal protein uL1 family. In terms of assembly, part of the 50S ribosomal subunit.

Functionally, binds directly to 23S rRNA. The L1 stalk is quite mobile in the ribosome, and is involved in E site tRNA release. Protein L1 is also a translational repressor protein, it controls the translation of the L11 operon by binding to its mRNA. This Desulfovibrio desulfuricans (strain ATCC 27774 / DSM 6949 / MB) protein is Large ribosomal subunit protein uL1.